A 569-amino-acid chain; its full sequence is 2-succinyl-5-enolpyruvyl-6-hydroxy-3-cyclohexene-1-carboxylate synthase (569 aa).

Belongs to the TPP enzyme family. MenD subfamily. As to quaternary structure, homodimer. Requires Mg(2+) as cofactor. The cofactor is Mn(2+). It depends on thiamine diphosphate as a cofactor.

It carries out the reaction isochorismate + 2-oxoglutarate + H(+) = 5-enolpyruvoyl-6-hydroxy-2-succinyl-cyclohex-3-ene-1-carboxylate + CO2. It functions in the pathway quinol/quinone metabolism; 1,4-dihydroxy-2-naphthoate biosynthesis; 1,4-dihydroxy-2-naphthoate from chorismate: step 2/7. The protein operates within quinol/quinone metabolism; menaquinone biosynthesis. Functionally, catalyzes the thiamine diphosphate-dependent decarboxylation of 2-oxoglutarate and the subsequent addition of the resulting succinic semialdehyde-thiamine pyrophosphate anion to isochorismate to yield 2-succinyl-5-enolpyruvyl-6-hydroxy-3-cyclohexene-1-carboxylate (SEPHCHC). In Paenarthrobacter aurescens (strain TC1), this protein is 2-succinyl-5-enolpyruvyl-6-hydroxy-3-cyclohexene-1-carboxylate synthase.